Here is a 608-residue protein sequence, read N- to C-terminus: Phosphogluconate dehydratase (608 aa).

Residues Cys-154 and Cys-221 each coordinate [4Fe-4S] cluster.

The protein belongs to the IlvD/Edd family. [4Fe-4S] cluster is required as a cofactor.

The enzyme catalyses 6-phospho-D-gluconate = 2-dehydro-3-deoxy-6-phospho-D-gluconate + H2O. It participates in carbohydrate metabolism; Entner-Doudoroff pathway. Catalyzes the dehydration of 6-phospho-D-gluconate to 2-dehydro-3-deoxy-6-phospho-D-gluconate. The polypeptide is Phosphogluconate dehydratase (Pseudomonas aeruginosa (strain ATCC 15692 / DSM 22644 / CIP 104116 / JCM 14847 / LMG 12228 / 1C / PRS 101 / PAO1)).